A 498-amino-acid polypeptide reads, in one-letter code: ATP synthase subunit beta, chloroplastic (498 aa).

172–179 (GGAGVGKT) is a binding site for ATP.

It belongs to the ATPase alpha/beta chains family. In terms of assembly, F-type ATPases have 2 components, CF(1) - the catalytic core - and CF(0) - the membrane proton channel. CF(1) has five subunits: alpha(3), beta(3), gamma(1), delta(1), epsilon(1). CF(0) has four main subunits: a(1), b(1), b'(1) and c(9-12).

Its subcellular location is the plastid. It localises to the chloroplast thylakoid membrane. It carries out the reaction ATP + H2O + 4 H(+)(in) = ADP + phosphate + 5 H(+)(out). Produces ATP from ADP in the presence of a proton gradient across the membrane. The catalytic sites are hosted primarily by the beta subunits. This chain is ATP synthase subunit beta, chloroplastic, found in Jasminum nudiflorum (Winter jasmine).